Reading from the N-terminus, the 212-residue chain is 7-carboxy-7-deazaguanine synthase (212 aa).

Substrate-binding positions include 22 to 24 and Arg37; that span reads LQG. Residues 28–212 form the Radical SAM core domain; the sequence is NTGMPAVFVR…VQTHKWAGIE (185 aa). [4Fe-4S] cluster contacts are provided by Cys41, Cys45, and Cys48. Mg(2+) is bound at residue Thr50. Thr78 lines the substrate pocket. S-adenosyl-L-methionine-binding positions include Gly80 and 122-124; that span reads SPK.

The protein belongs to the radical SAM superfamily. 7-carboxy-7-deazaguanine synthase family. In terms of assembly, homodimer. [4Fe-4S] cluster is required as a cofactor. It depends on S-adenosyl-L-methionine as a cofactor. Requires Mg(2+) as cofactor.

The enzyme catalyses 6-carboxy-5,6,7,8-tetrahydropterin + H(+) = 7-carboxy-7-deazaguanine + NH4(+). It functions in the pathway purine metabolism; 7-cyano-7-deazaguanine biosynthesis. In terms of biological role, catalyzes the complex heterocyclic radical-mediated conversion of 6-carboxy-5,6,7,8-tetrahydropterin (CPH4) to 7-carboxy-7-deazaguanine (CDG), a step common to the biosynthetic pathways of all 7-deazapurine-containing compounds. This is 7-carboxy-7-deazaguanine synthase from Neisseria meningitidis serogroup B (strain ATCC BAA-335 / MC58).